A 508-amino-acid polypeptide reads, in one-letter code: Aldehyde dehydrogenase family 7 member A1 (508 aa).

244–249 (GSSKVG) provides a ligand contact to NAD(+). The Proton acceptor role is filled by glutamate 266. The Nucleophile role is filled by cysteine 300.

Belongs to the aldehyde dehydrogenase family. Homotetramer.

It catalyses the reaction an aldehyde + NAD(+) + H2O = a carboxylate + NADH + 2 H(+). Functionally, may play a role in fruit development. The chain is Aldehyde dehydrogenase family 7 member A1 from Malus domestica (Apple).